The chain runs to 104 residues: Holotricin-3 (104 aa).

The signal sequence occupies residues 1 to 20; sequence MNKLIILGLACIIAVASAMP. The disordered stretch occupies residues 22–104; the sequence is GPGDGHGGGH…HHGGYQTHGY (83 aa). The span at 23 to 97 shows a compositional bias: gly residues; sequence PGDGHGGGHG…PGGHGGGHHG (75 aa). A run of 18 repeats spans residues 27–30, 31–34, 35–38, 39–42, 43–46, 47–50, 51–54, 55–58, 59–62, 63–66, 67–70, 71–74, 75–78, 79–82, 83–86, 87–90, 91–94, and 96–98. Positions 27–98 are 18 X 4 AA approximate tandem repeats of H-G-G-G; it reads HGGGHGGGHG…GGHGGGHHGG (72 aa).

The protein to T.molitor tenecin 3.

Its subcellular location is the secreted. Functionally, has antifungal activity against C.albicans. The sequence is that of Holotricin-3 from Holotrichia diomphalia (Korean black chafer).